The primary structure comprises 314 residues: Methionyl-tRNA formyltransferase (314 aa).

110–113 (SLLP) provides a ligand contact to (6S)-5,6,7,8-tetrahydrofolate.

This sequence belongs to the Fmt family.

The catalysed reaction is L-methionyl-tRNA(fMet) + (6R)-10-formyltetrahydrofolate = N-formyl-L-methionyl-tRNA(fMet) + (6S)-5,6,7,8-tetrahydrofolate + H(+). Functionally, attaches a formyl group to the free amino group of methionyl-tRNA(fMet). The formyl group appears to play a dual role in the initiator identity of N-formylmethionyl-tRNA by promoting its recognition by IF2 and preventing the misappropriation of this tRNA by the elongation apparatus. The chain is Methionyl-tRNA formyltransferase from Bacillus thuringiensis subsp. konkukian (strain 97-27).